A 160-amino-acid polypeptide reads, in one-letter code: S-ribosylhomocysteine lyase (160 aa).

3 residues coordinate Fe cation: histidine 57, histidine 61, and cysteine 127.

The protein belongs to the LuxS family. As to quaternary structure, homodimer. It depends on Fe cation as a cofactor.

It catalyses the reaction S-(5-deoxy-D-ribos-5-yl)-L-homocysteine = (S)-4,5-dihydroxypentane-2,3-dione + L-homocysteine. Involved in the synthesis of autoinducer 2 (AI-2) which is secreted by bacteria and is used to communicate both the cell density and the metabolic potential of the environment. The regulation of gene expression in response to changes in cell density is called quorum sensing. Catalyzes the transformation of S-ribosylhomocysteine (RHC) to homocysteine (HC) and 4,5-dihydroxy-2,3-pentadione (DPD). The protein is S-ribosylhomocysteine lyase of Streptococcus agalactiae serotype V (strain ATCC BAA-611 / 2603 V/R).